The following is a 184-amino-acid chain: Peptidyl-tRNA hydrolase (184 aa).

Y14 provides a ligand contact to tRNA. H19 functions as the Proton acceptor in the catalytic mechanism. 3 residues coordinate tRNA: F64, N66, and N112.

The protein belongs to the PTH family. In terms of assembly, monomer.

It is found in the cytoplasm. It carries out the reaction an N-acyl-L-alpha-aminoacyl-tRNA + H2O = an N-acyl-L-amino acid + a tRNA + H(+). In terms of biological role, hydrolyzes ribosome-free peptidyl-tRNAs (with 1 or more amino acids incorporated), which drop off the ribosome during protein synthesis, or as a result of ribosome stalling. Functionally, catalyzes the release of premature peptidyl moieties from peptidyl-tRNA molecules trapped in stalled 50S ribosomal subunits, and thus maintains levels of free tRNAs and 50S ribosomes. This chain is Peptidyl-tRNA hydrolase, found in Listeria innocua serovar 6a (strain ATCC BAA-680 / CLIP 11262).